The primary structure comprises 369 residues: Anhydro-N-acetylmuramic acid kinase (369 aa).

ATP is bound at residue 12-19; it reads GTSMDGVD.

This sequence belongs to the anhydro-N-acetylmuramic acid kinase family.

The catalysed reaction is 1,6-anhydro-N-acetyl-beta-muramate + ATP + H2O = N-acetyl-D-muramate 6-phosphate + ADP + H(+). Its pathway is amino-sugar metabolism; 1,6-anhydro-N-acetylmuramate degradation. It participates in cell wall biogenesis; peptidoglycan recycling. Its function is as follows. Catalyzes the specific phosphorylation of 1,6-anhydro-N-acetylmuramic acid (anhMurNAc) with the simultaneous cleavage of the 1,6-anhydro ring, generating MurNAc-6-P. Is required for the utilization of anhMurNAc either imported from the medium or derived from its own cell wall murein, and thus plays a role in cell wall recycling. The chain is Anhydro-N-acetylmuramic acid kinase from Shewanella baltica (strain OS155 / ATCC BAA-1091).